The chain runs to 151 residues: MESYGLGQLKNFEYLDHTADIMFHTWGKDLKEALEQMVLIMNNYMVELDSVELDDSATEQTISVNGHDMDSLLFALLDEFLFVFSTEFIIFKQVQIISFDRENFSIKAIGKGVELDKSKHTTGTEIKAITYSCMKIEENPDKSDIHVIVDI.

Positions 20, 150, and 151 each coordinate Ca(2+).

This sequence belongs to the archease family.

Functionally, component of the tRNA-splicing ligase complex required to facilitate the enzymatic turnover of catalytic subunit RtcB. The chain is Protein archease-like from Dictyostelium discoideum (Social amoeba).